The following is a 381-amino-acid chain: Alkanesulfonate monooxygenase (381 aa).

The protein belongs to the SsuD family. In terms of assembly, homotetramer.

It carries out the reaction an alkanesulfonate + FMNH2 + O2 = an aldehyde + FMN + sulfite + H2O + 2 H(+). Functionally, catalyzes the desulfonation of aliphatic sulfonates. This Escherichia coli O81 (strain ED1a) protein is Alkanesulfonate monooxygenase.